The following is a 74-amino-acid chain: Antimicrobial peptide AcrAP1 (74 aa).

A signal peptide spans 1-22; the sequence is MEIKYLLTVFLVLLIVSDHCQA. Lys-40 is subject to Lysine amide. A propeptide spanning residues 46-74 is cleaved from the precursor; that stretch reads DLDGQIDRFRNFRKRDAELEELLSKLPIY.

The protein belongs to the non-disulfide-bridged peptide (NDBP) superfamily. Short antimicrobial peptide (group 4) family. Expressed by the venom gland.

The protein localises to the secreted. It localises to the target cell membrane. Functionally, has antimicrobial activity against the Gram-positive bacteria S.aureus (MIC=8 uM) and the yeast C.albicans (MIC=16 uM). Causes hemolysis on horse erythrocytes (64 uM for 100% hemolysis). Minimum bactericidal concentrations have also been tested against S.aureus and is four-fold higher (MBC=32 uM). The protein is Antimicrobial peptide AcrAP1 of Androctonus crassicauda (Arabian fat-tailed scorpion).